The sequence spans 351 residues: Dihydroorotate dehydrogenase (quinone) (351 aa).

FMN is bound by residues 67–71 (AGFDK) and T91. K71 contacts substrate. Substrate is bound at residue 116–120 (NAMGF). The FMN site is built by N145 and N178. N178 provides a ligand contact to substrate. S181 serves as the catalytic Nucleophile. Position 183 (N183) interacts with substrate. Residues K214 and T242 each contribute to the FMN site. 243–244 (NT) is a binding site for substrate. Residues G262, G291, and 312–313 (YS) contribute to the FMN site.

The protein belongs to the dihydroorotate dehydrogenase family. Type 2 subfamily. As to quaternary structure, monomer. FMN serves as cofactor.

It localises to the cell membrane. The enzyme catalyses (S)-dihydroorotate + a quinone = orotate + a quinol. Its pathway is pyrimidine metabolism; UMP biosynthesis via de novo pathway; orotate from (S)-dihydroorotate (quinone route): step 1/1. Functionally, catalyzes the conversion of dihydroorotate to orotate with quinone as electron acceptor. The chain is Dihydroorotate dehydrogenase (quinone) from Helicobacter pylori (strain Shi470).